The following is a 459-amino-acid chain: Argininosuccinate lyase (459 aa).

This sequence belongs to the lyase 1 family. Argininosuccinate lyase subfamily.

It localises to the cytoplasm. It catalyses the reaction 2-(N(omega)-L-arginino)succinate = fumarate + L-arginine. It participates in amino-acid biosynthesis; L-arginine biosynthesis; L-arginine from L-ornithine and carbamoyl phosphate: step 3/3. This chain is Argininosuccinate lyase, found in Prochlorococcus marinus (strain AS9601).